Consider the following 395-residue polypeptide: Xylose isomerase (395 aa).

Active-site residues include His-54 and Asp-57. Residues Glu-181, Glu-217, His-220, Asp-245, Asp-255, Asp-257, and Asp-293 each contribute to the Mg(2+) site.

The protein belongs to the xylose isomerase family. Homotetramer. It depends on Mg(2+) as a cofactor.

The protein resides in the cytoplasm. The catalysed reaction is alpha-D-xylose = alpha-D-xylulofuranose. The sequence is that of Xylose isomerase from Arthrobacter sp. (strain FB24).